The primary structure comprises 540 residues: Threonine--tRNA ligase catalytic subunit (540 aa).

The tract at residues 134 to 428 is catalytic; that stretch reads DHRIIGERLD…LLEHFRGKLP (295 aa). Zn(2+) is bound by residues Cys226, His277, and His405.

This sequence belongs to the class-II aminoacyl-tRNA synthetase family. As to quaternary structure, homodimer. Probably interacts with its editing subunit. Zn(2+) serves as cofactor.

It is found in the cytoplasm. It carries out the reaction tRNA(Thr) + L-threonine + ATP = L-threonyl-tRNA(Thr) + AMP + diphosphate + H(+). Its function is as follows. Catalyzes the attachment of threonine to tRNA(Thr) in a two-step reaction: L-threonine is first activated by ATP to form Thr-AMP and then transferred to the acceptor end of tRNA(Thr). Also activates L-serine and transfers it to tRNA(Thr) but cannot deacylate incorrectly charged amino acid; unlike most archaea the editing function is found in a freestanding protein. This Sulfurisphaera tokodaii (strain DSM 16993 / JCM 10545 / NBRC 100140 / 7) (Sulfolobus tokodaii) protein is Threonine--tRNA ligase catalytic subunit.